The primary structure comprises 445 residues: Interferon-activable protein 202 (445 aa).

The span at 1 to 27 (MSNRNLRSSTNSEFSEGQHQTPSSDSS) shows a compositional bias: polar residues. The disordered stretch occupies residues 1–57 (MSNRNLRSSTNSEFSEGQHQTPSSDSSGHGEDQPQASPGPNKKSHTPKKNISKGAVL). Residues 42–51 (KKSHTPKKNI) are compositionally biased toward basic residues. 2 consecutive HIN-200 domains span residues 46 to 243 (TPKK…IKGE) and 244 to 441 (KLLK…MEVI). Required for homomultimerization regions lie at residues 82-89 (MFHATVAT) and 281-288 (MFHATVAT).

This sequence belongs to the HIN-200 family. Homomultimer; homotetramerizes (via HIN-200 domain 2), enhancing affinity for double-stranded DNA (dsDNA). Interacts (via HIN-200 domain 2) with AIM2 (via HIN-200 domain); preventing activation of the AIM2 inflammasome. Binds to several transcription factors, including NF-kappa-B p50 (NFKB1) and p65 (RELA), FOS, JUN, E2F1, E2F4, MYOD1 and myogenin. Also binds TP53/p53, the hypophosphorylated, growth-inhibitory form of the retinoblastoma protein and the p53-binding protein 1 (TP53BP1). Phosphorylated.

It is found in the cytoplasm. It localises to the nucleus. Functionally, DNA-binding protein involved in innate immune response and has anti-inflammatory activity. Inhibits caspase activation in response to cytosolic DNA by preventing activation of the AIM2 inflammasome, probably by sequestering cytoplasmic DNA and preventing its being bound by AIM2. Also inhibits activation of the AIM2 inflammasome via a direct interaction with AIM2, which prevents the interaction between AIM2 and PYCARD and formation of the AIM2 inflammasome. Binds double-stranded DNA (dsDNA) in the cytosol. Has anti-apoptotic effects due to inhibition of the transcriptional activity of TP53/p53. Inhibits the transcriptional activity of several transcription factors, including NF-kappa-B p50 and p65, FOS, JUN, E2F1, E2F4, MYOD1 and myogenin. In Mus musculus (Mouse), this protein is Interferon-activable protein 202.